Reading from the N-terminus, the 656-residue chain is Pheromone-regulated membrane protein 2 (656 aa).

4 helical membrane-spanning segments follow: residues 16–36 (FFSC…ILTI), 320–340 (IIFT…ERIL), 422–442 (WIIS…LIHW), and 634–654 (WGLL…FIIL).

Its subcellular location is the membrane. This chain is Pheromone-regulated membrane protein 2 (PRM2), found in Saccharomyces cerevisiae (strain ATCC 204508 / S288c) (Baker's yeast).